A 621-amino-acid polypeptide reads, in one-letter code: Glutamine--fructose-6-phosphate aminotransferase [isomerizing] (621 aa).

Cys2 serves as the catalytic Nucleophile; for GATase activity. The Glutamine amidotransferase type-2 domain maps to 2-223 (CGIIGYVGEG…DRELGIISIS (222 aa)). SIS domains follow at residues 289 to 436 (LHLE…HKFT) and 470 to 611 (LSKQ…IDKP). Lys616 serves as the catalytic For Fru-6P isomerization activity.

Homodimer.

It is found in the plastid. Its subcellular location is the chloroplast. It catalyses the reaction D-fructose 6-phosphate + L-glutamine = D-glucosamine 6-phosphate + L-glutamate. In terms of biological role, catalyzes the first step in hexosamine metabolism, converting fructose-6P into glucosamine-6P using glutamine as a nitrogen source. The polypeptide is Glutamine--fructose-6-phosphate aminotransferase [isomerizing] (Cyanidium caldarium (Red alga)).